Here is a 425-residue protein sequence, read N- to C-terminus: Voltage-dependent calcium channel gamma-8 subunit (425 aa).

The next 4 membrane-spanning stretches (helical) occupy residues 19-39 (VQVLLTTVGAFAAFGLMTIAI), 129-149 (SIFPILSAILLLLGGVCVAAS), 158-178 (IILGAGILFVAAGLSNIIGVI), and 208-228 (FGGLSFILAEVIGVLAVNIYI). A phosphoserine mark is found at Ser-252 and Ser-255. Residues 272-304 (RRSRSSSRSSEPSPSRDASPGGPGGPGFASTDI) are disordered. Residues 277–287 (SSRSSEPSPSR) are compositionally biased toward low complexity. Residues 318–338 (VAAGLAGAGGGGGGAVGAFGG) form a helical membrane-spanning segment. Positions 343–354 (AGGGGGGGGGAG) are enriched in gly residues. Disordered stretches follow at residues 343–365 (AGGGGGGGGGAGAERDRGGASGF) and 377–425 (GGGV…TTPV). The segment covering 387-401 (PPAPPAPAPPAPSAP) has biased composition (pro residues). The segment covering 412–425 (ASNTNTLNRKTTPV) has biased composition (polar residues).

The protein belongs to the PMP-22/EMP/MP20 family. CACNG subfamily. Interacts with CACNA1C. Identified in a complex with the L-type calcium channel subunits CACNA1C, CACNA2D1 and either CACNB1 or CACNB2. Acts as an auxiliary subunit for AMPA-selective glutamate receptors (AMPARs). Found in a complex with GRIA1, GRIA2, GRIA3, GRIA4, CNIH2, CNIH3, CACNG2, CACNG3, CACNG4, CACNG5 and CACNG7. Interacts with CNIH2. Found in a complex with GRIA1, GRIA2, GRIA3, GRIA4, DLG4 and CNIH2. Post-translationally, palmitoylated. Probably palmitoylated by ZDHHC3 and ZDHHC7. Detected in heart left ventricle.

It localises to the cell membrane. The protein localises to the postsynaptic density membrane. Regulates the activity of L-type calcium channels that contain CACNA1C as pore-forming subunit. Regulates the trafficking and gating properties of AMPA-selective glutamate receptors (AMPARs). Promotes their targeting to the cell membrane and synapses and modulates their gating properties by slowing their rates of activation, deactivation and desensitization and by mediating their resensitization. Does not show subunit-specific AMPA receptor regulation and regulates all AMPAR subunits. This chain is Voltage-dependent calcium channel gamma-8 subunit, found in Homo sapiens (Human).